The sequence spans 90 residues: uncharacterized protein (90 aa).

The tract at residues 53–90 (WRARPDANDADTTSSSSSSETCTESDDSSDVPPARYAV) is disordered. The segment covering 63–74 (DTTSSSSSSETC) has biased composition (low complexity).

This is an uncharacterized protein from Orgyia pseudotsugata (Douglas-fir tussock moth).